Consider the following 430-residue polypeptide: tRNA(Ile)-lysidine synthase (430 aa).

An ATP-binding site is contributed by 24-29; the sequence is SGGLDS.

This sequence belongs to the tRNA(Ile)-lysidine synthase family.

The protein localises to the cytoplasm. It catalyses the reaction cytidine(34) in tRNA(Ile2) + L-lysine + ATP = lysidine(34) in tRNA(Ile2) + AMP + diphosphate + H(+). In terms of biological role, ligates lysine onto the cytidine present at position 34 of the AUA codon-specific tRNA(Ile) that contains the anticodon CAU, in an ATP-dependent manner. Cytidine is converted to lysidine, thus changing the amino acid specificity of the tRNA from methionine to isoleucine. The polypeptide is tRNA(Ile)-lysidine synthase (Haemophilus influenzae (strain PittGG)).